The sequence spans 108 residues: Movement protein TGB2 (108 aa).

The Cytoplasmic segment spans residues 1 to 14; sequence MPLTPPPDHSITYR. A helical transmembrane segment spans residues 15–31; that stretch reads ILAVGLCSCCAIYAATR. Residues 32 to 67 are Lumenal-facing; sequence STLPHTGDNLHSLPYGGKYSDGTKSICYSGPGPTPD. A helical transmembrane segment spans residues 68-85; the sequence is IPTHLPALLVLVLVVAIY. The Cytoplasmic portion of the chain corresponds to 86–108; sequence ASSRLDFSVNYRCSCRVHNRSGQ.

It belongs to the Tymovirales TGBp2 protein family.

It localises to the host endoplasmic reticulum membrane. Its function is as follows. Plays a role in viral cell-to-cell propagation, by facilitating genome transport to neighboring plant cells through plasmosdesmata,. The protein is Movement protein TGB2 of Strawberry mild yellow edge-associated virus (SMYEaV).